The sequence spans 517 residues: Maturase K (517 aa).

The protein belongs to the intron maturase 2 family. MatK subfamily.

The protein resides in the plastid. It is found in the chloroplast. Usually encoded in the trnK tRNA gene intron. Probably assists in splicing its own and other chloroplast group II introns. This chain is Maturase K, found in Trillium maculatum (Spotted wakerobin).